Here is a 674-residue protein sequence, read N- to C-terminus: Slender lobes-like protein (674 aa).

Disordered stretches follow at residues 65–137 (LEKS…NASK), 168–321 (NELN…TIKK), and 352–382 (QKSR…RVEV). Over residues 73 to 97 (PKKKVQTKKHLPPVRKKDSVKRRRI) the composition is skewed to basic residues. The span at 127–137 (NQSNCSSNASK) shows a compositional bias: polar residues. Residues 216–228 (VDSDDEEEQDQDQ) show a composition bias toward acidic residues. Basic and acidic residues predominate over residues 233–245 (KPAESENHSEIKK). Residue S248 is modified to Phosphoserine. Positions 272–312 (EDPKEAGKNEESDKDKPAENGKSDKDKQAETEMSDEDKPSE) are enriched in basic and acidic residues. A phosphoserine mark is found at S358 and S391. 2 disordered regions span residues 395 to 585 (MVAE…AGYV) and 618 to 659 (KYFR…NSAK). Over residues 400–410 (KRQKNKRKRLS) the composition is skewed to basic residues. S414 bears the Phosphoserine mark. A compositionally biased stretch (basic residues) spans 548 to 558 (AKQKKKGKKKQ).

The chain is Slender lobes-like protein from Drosophila melanogaster (Fruit fly).